A 405-amino-acid polypeptide reads, in one-letter code: Endo-1,4-beta-xylanase 5 (405 aa).

The first 22 residues, 1–22 (MTRLATLITLAGLLAVSPGAYA), serve as a signal peptide directing secretion. Residues Asn27 and Asn69 are each glycosylated (N-linked (GlcNAc...) asparagine). The region spanning 32-352 (STGAEGLNSL…KPAYTSVSSL (321 aa)) is the GH10 domain. The active-site Proton donor is Glu166. A glycan (N-linked (GlcNAc...) asparagine) is linked at Asn171. The active-site Nucleophile is the Glu273. Cys302 and Cys308 are oxidised to a cystine. Residue Gly380 is the site of GPI-anchor amidated glycine attachment. Positions 381-405 (AGRETVSIAGLTLALSSLAFGMFML) are cleaved as a propeptide — removed in mature form.

Belongs to the glycosyl hydrolase 10 (cellulase F) family.

Its subcellular location is the cell membrane. It localises to the secreted. The catalysed reaction is Endohydrolysis of (1-&gt;4)-beta-D-xylosidic linkages in xylans.. The protein operates within glycan degradation; xylan degradation. In terms of biological role, endo-1,4-beta-xylanase involved in the hydrolysis of xylan, a major structural heterogeneous polysaccharide found in plant biomass representing the second most abundant polysaccharide in the biosphere, after cellulose. The polypeptide is Endo-1,4-beta-xylanase 5 (XYL5) (Pyricularia grisea (Crabgrass-specific blast fungus)).